Consider the following 131-residue polypeptide: Small ribosomal subunit protein uS11 (131 aa).

This sequence belongs to the universal ribosomal protein uS11 family. In terms of assembly, part of the 30S ribosomal subunit. Interacts with proteins S7 and S18. Binds to IF-3.

Located on the platform of the 30S subunit, it bridges several disparate RNA helices of the 16S rRNA. Forms part of the Shine-Dalgarno cleft in the 70S ribosome. The sequence is that of Small ribosomal subunit protein uS11 from Exiguobacterium sp. (strain ATCC BAA-1283 / AT1b).